The sequence spans 249 residues: Proteasome subunit alpha type-3 (249 aa).

Residue serine 2 is modified to N-acetylserine. 2 positions are modified to O-acetylserine: serine 214 and serine 220. Lysine 221 participates in a covalent cross-link: Glycyl lysine isopeptide (Lys-Gly) (interchain with G-Cter in ubiquitin).

The protein belongs to the peptidase T1A family. Component of the 20S core complex of the 26S proteasome. The 26S proteasome is composed of a core protease (CP), known as the 20S proteasome, capped at one or both ends by the 19S regulatory particle (RP/PA700). The 20S proteasome core is composed of 28 subunits that are arranged in four stacked rings, resulting in a barrel-shaped structure. The two end rings are each formed by seven alpha subunits, and the two central rings are each formed by seven beta subunits. The catalytic chamber with the active sites is on the inside of the barrel. In terms of tissue distribution, ubiquitous low levels.

The protein localises to the cytoplasm. It is found in the nucleus. Functionally, the proteasome is a multicatalytic proteinase complex which is characterized by its ability to cleave peptides with Arg, Phe, Tyr, Leu, and Glu adjacent to the leaving group at neutral or slightly basic pH. The proteasome has an ATP-dependent proteolytic activity. The protein is Proteasome subunit alpha type-3 (PAG1) of Arabidopsis thaliana (Mouse-ear cress).